The chain runs to 422 residues: UDP-N-acetylglucosamine 1-carboxyvinyltransferase (422 aa).

22–23 is a phosphoenolpyruvate binding site; sequence KN. Residue Arg92 coordinates UDP-N-acetyl-alpha-D-glucosamine. The Proton donor role is filled by Cys116. Cys116 is subject to 2-(S-cysteinyl)pyruvic acid O-phosphothioketal. UDP-N-acetyl-alpha-D-glucosamine is bound by residues 121–125, Asp307, and Ile329; that span reads RPVDQ.

It belongs to the EPSP synthase family. MurA subfamily.

It localises to the cytoplasm. It carries out the reaction phosphoenolpyruvate + UDP-N-acetyl-alpha-D-glucosamine = UDP-N-acetyl-3-O-(1-carboxyvinyl)-alpha-D-glucosamine + phosphate. The protein operates within cell wall biogenesis; peptidoglycan biosynthesis. Cell wall formation. Adds enolpyruvyl to UDP-N-acetylglucosamine. This is UDP-N-acetylglucosamine 1-carboxyvinyltransferase from Psychrobacter arcticus (strain DSM 17307 / VKM B-2377 / 273-4).